The following is a 697-amino-acid chain: Elongation factor G (697 aa).

One can recognise a tr-type G domain in the interval 8-290; it reads ERYRNFGIMA…AVVDYLPSPL (283 aa). Residues 17 to 24, 88 to 92, and 142 to 145 contribute to the GTP site; these read AHIDAGKT, DTPGH, and NKLD.

Belongs to the TRAFAC class translation factor GTPase superfamily. Classic translation factor GTPase family. EF-G/EF-2 subfamily.

The protein localises to the cytoplasm. Catalyzes the GTP-dependent ribosomal translocation step during translation elongation. During this step, the ribosome changes from the pre-translocational (PRE) to the post-translocational (POST) state as the newly formed A-site-bound peptidyl-tRNA and P-site-bound deacylated tRNA move to the P and E sites, respectively. Catalyzes the coordinated movement of the two tRNA molecules, the mRNA and conformational changes in the ribosome. The protein is Elongation factor G of Sphingopyxis alaskensis (strain DSM 13593 / LMG 18877 / RB2256) (Sphingomonas alaskensis).